The primary structure comprises 316 residues: MQILLANPRGFCAGVDRAISIVENALEIYGAPIYVRHEVVHNRYVVESLRERGAIFIEQISEVPDGTILIFSAHGVSQAVRNEAKSRDLTVFDATCPLVTKVHMEVARASRRGEESILIGHAGHPEVEGTMGQYSNPEGGMYLVESPEDVLTLNVKNDAKLSFMTQTTLSVDDTSDVIDALRKRFPKIVGPRKDDICYATTNRQEAVRALAEQADVVLVVGSKNSSNSNRLAELAQRMGKTAFLIDDATDIQEAWVKDVNCVGVTAGASAPDILVQNVIARLQELGGGDAIPLEGREENIVFEVPKELRIDAREVE.

Cys-12 serves as a coordination point for [4Fe-4S] cluster. Residues His-41 and His-74 each coordinate (2E)-4-hydroxy-3-methylbut-2-enyl diphosphate. The dimethylallyl diphosphate site is built by His-41 and His-74. Positions 41 and 74 each coordinate isopentenyl diphosphate. Cys-96 lines the [4Fe-4S] cluster pocket. His-124 is a (2E)-4-hydroxy-3-methylbut-2-enyl diphosphate binding site. His-124 is a dimethylallyl diphosphate binding site. His-124 is an isopentenyl diphosphate binding site. The active-site Proton donor is Glu-126. Thr-167 contributes to the (2E)-4-hydroxy-3-methylbut-2-enyl diphosphate binding site. A [4Fe-4S] cluster-binding site is contributed by Cys-197. (2E)-4-hydroxy-3-methylbut-2-enyl diphosphate is bound by residues Ser-225, Ser-226, Asn-227, and Ser-269. 4 residues coordinate dimethylallyl diphosphate: Ser-225, Ser-226, Asn-227, and Ser-269. 4 residues coordinate isopentenyl diphosphate: Ser-225, Ser-226, Asn-227, and Ser-269.

It belongs to the IspH family. In terms of assembly, homodimer. [4Fe-4S] cluster serves as cofactor.

The catalysed reaction is isopentenyl diphosphate + 2 oxidized [2Fe-2S]-[ferredoxin] + H2O = (2E)-4-hydroxy-3-methylbut-2-enyl diphosphate + 2 reduced [2Fe-2S]-[ferredoxin] + 2 H(+). It catalyses the reaction dimethylallyl diphosphate + 2 oxidized [2Fe-2S]-[ferredoxin] + H2O = (2E)-4-hydroxy-3-methylbut-2-enyl diphosphate + 2 reduced [2Fe-2S]-[ferredoxin] + 2 H(+). It functions in the pathway isoprenoid biosynthesis; dimethylallyl diphosphate biosynthesis; dimethylallyl diphosphate from (2E)-4-hydroxy-3-methylbutenyl diphosphate: step 1/1. It participates in isoprenoid biosynthesis; isopentenyl diphosphate biosynthesis via DXP pathway; isopentenyl diphosphate from 1-deoxy-D-xylulose 5-phosphate: step 6/6. Functionally, catalyzes the conversion of 1-hydroxy-2-methyl-2-(E)-butenyl 4-diphosphate (HMBPP) into a mixture of isopentenyl diphosphate (IPP) and dimethylallyl diphosphate (DMAPP). Acts in the terminal step of the DOXP/MEP pathway for isoprenoid precursor biosynthesis. The polypeptide is 4-hydroxy-3-methylbut-2-enyl diphosphate reductase (Enterobacter sp. (strain 638)).